The sequence spans 157 residues: Alanyl-tRNA editing protein AlaX-S (157 aa).

Zn(2+) contacts are provided by H9, H13, C116, and H120.

Belongs to the class-II aminoacyl-tRNA synthetase family. Editing domain AlaX-S subfamily. Monomer and homodimer; the dimer is less active in tRNA editing and does not have a zinc ion associated with it. Another report shows only a monomeric form. Zn(2+) is required as a cofactor.

It localises to the cytoplasm. In terms of biological role, functions in trans to edit the amino acid moiety from mischarged charged Ser-tRNA(Ala). Has little activity against Gly-tRNA(Ala). The protein is Alanyl-tRNA editing protein AlaX-S (alaXS) of Pyrococcus horikoshii (strain ATCC 700860 / DSM 12428 / JCM 9974 / NBRC 100139 / OT-3).